The following is a 364-amino-acid chain: MKIDGRPYRTIFPEPGGDAVCVIDQTRLPFAFEIRRLTTAEEAAEAIRTMVVRGAPLIGVTAAYGLALGLRRDPSDAGLERIAAMLAATRPTAVNLRWALERLSGILRPLPPDTRAPQAFAEAGRIAEEDVANCRAIGEHGARLIAQTAAKGRRVNVLTHCNAGWLATVDWGTALAPIYVAHDAGVPVHVFVDETRPRNQGAALTAFELNAHGVPHTVVADNAGGHLMQHGGVDLCIVGSDRTTSTGDVCNKIGTYLKALAAFDNGVPFYAALPVSTIDWTLTDGVAGIPIEERDGREVTHLTGRTEDGGFATIQVVSPGSPVANPAFDVTPARLVTGLITERGVAEATEEGLLRLYPERRKAA.

Substrate contacts are provided by residues 53-55 (RGA), R90, and Q200. The Proton donor role is filled by D241. 251–252 (NK) lines the substrate pocket.

This sequence belongs to the eIF-2B alpha/beta/delta subunits family. MtnA subfamily.

It catalyses the reaction 5-(methylsulfanyl)-alpha-D-ribose 1-phosphate = 5-(methylsulfanyl)-D-ribulose 1-phosphate. The protein operates within amino-acid biosynthesis; L-methionine biosynthesis via salvage pathway; L-methionine from S-methyl-5-thio-alpha-D-ribose 1-phosphate: step 1/6. In terms of biological role, catalyzes the interconversion of methylthioribose-1-phosphate (MTR-1-P) into methylthioribulose-1-phosphate (MTRu-1-P). This is Methylthioribose-1-phosphate isomerase from Methylobacterium nodulans (strain LMG 21967 / CNCM I-2342 / ORS 2060).